The chain runs to 117 residues: Large ribosomal subunit protein bL20 (117 aa).

Belongs to the bacterial ribosomal protein bL20 family.

Its function is as follows. Binds directly to 23S ribosomal RNA and is necessary for the in vitro assembly process of the 50S ribosomal subunit. It is not involved in the protein synthesizing functions of that subunit. This chain is Large ribosomal subunit protein bL20, found in Rickettsia typhi (strain ATCC VR-144 / Wilmington).